Here is a 1370-residue protein sequence, read N- to C-terminus: DNA-directed RNA polymerase subunit beta (1370 aa).

Belongs to the RNA polymerase beta chain family. As to quaternary structure, the RNAP catalytic core consists of 2 alpha, 1 beta, 1 beta' and 1 omega subunit. When a sigma factor is associated with the core the holoenzyme is formed, which can initiate transcription.

The enzyme catalyses RNA(n) + a ribonucleoside 5'-triphosphate = RNA(n+1) + diphosphate. In terms of biological role, DNA-dependent RNA polymerase catalyzes the transcription of DNA into RNA using the four ribonucleoside triphosphates as substrates. This chain is DNA-directed RNA polymerase subunit beta, found in Verminephrobacter eiseniae (strain EF01-2).